Here is a 397-residue protein sequence, read N- to C-terminus: MEQTWRWYGPNDPVSLDDIRQAGATGVVTALHHIPNGVVWPVSEIKQRQAELAAKNLVWSVVESVPIHEDIKTHSGNYQQYIENYQQTLRNIAECGIDTVCYNFMPILDWTRTDLEYELPDGSKALRFDQIAFAAFELHILKRPGASNDYTAEEQVQAEAYFNAMTEADIAKLTGNIIAGLPGAEEGYTLDQFRVRLAEYDGIDKAQLRENMAYFLRAIIPVAEQVGLRMAVHPDDPPRPILGLPRIVSTIEDMQWLKETVDSIHNGFTMCTGSYGVRADNDLVKMIETFGDRIHFTHLRSTCREGNPKTFHEGGHLQGDVDMYSVVKAILTEEQRRQSLGDMRPIPMRPDHGHQMLDDLHKKTNPGYSAIGRLKGLAEVRGVELALKRTFFPELKQ.

It belongs to the mannonate dehydratase family. Fe(2+) serves as cofactor. The cofactor is Mn(2+).

It catalyses the reaction D-mannonate = 2-dehydro-3-deoxy-D-gluconate + H2O. Its pathway is carbohydrate metabolism; pentose and glucuronate interconversion. Catalyzes the dehydration of D-mannonate. The protein is Mannonate dehydratase of Yersinia pestis bv. Antiqua (strain Antiqua).